A 266-amino-acid polypeptide reads, in one-letter code: Ribonuclease 3 (266 aa).

The 123-residue stretch at 8–130 folds into the RNase III domain; it reads LARLTKKLGY…IIGAVYLDSN (123 aa). Mg(2+) is bound at residue Glu-43. The active site involves Asp-47. Residues Asp-116 and Glu-119 each contribute to the Mg(2+) site. Glu-119 is an active-site residue. One can recognise a DRBM domain in the interval 157–227; that stretch reads DPKTRLQEFL…AQQILALIEK (71 aa). Residues 229 to 266 form a disordered region; it reads REQEKEVKIKPTKQAKLANPRHTKSNPSSSSKKSSTRK. A compositionally biased stretch (low complexity) spans 253–266; it reads SNPSSSSKKSSTRK.

It belongs to the ribonuclease III family. Homodimer. It depends on Mg(2+) as a cofactor.

The protein resides in the cytoplasm. The enzyme catalyses Endonucleolytic cleavage to 5'-phosphomonoester.. Functionally, digests double-stranded RNA. Involved in the processing of primary rRNA transcript to yield the immediate precursors to the large and small rRNAs (23S and 16S). Processes some mRNAs, and tRNAs when they are encoded in the rRNA operon. Processes pre-crRNA and tracrRNA of type II CRISPR loci if present in the organism. The protein is Ribonuclease 3 of Colwellia psychrerythraea (strain 34H / ATCC BAA-681) (Vibrio psychroerythus).